We begin with the raw amino-acid sequence, 204 residues long: GATA transcription factor 14 (204 aa).

Residues 57-66 (REFDTNDSKP) are compositionally biased toward basic and acidic residues. A disordered region spans residues 57-102 (REFDTNDSKPSRNFSNLPTATRGRLHAPKRSGNKRGRQKRLSFKSP). Basic residues predominate over residues 79–98 (GRLHAPKRSGNKRGRQKRLS). The GATA-type zinc finger occupies 111–165 (GITDKSCSHCGTRKTPLWREGPRGAGTLCNACGMRYRTGRLLPEYRPASSPDFKP). The disordered stretch occupies residues 180 to 204 (RERKSSPPNSFGFSESYHSTRKLGF). A compositionally biased stretch (polar residues) spans 185–196 (SPPNSFGFSESY).

Belongs to the type IV zinc-finger family. Class A subfamily.

Its subcellular location is the nucleus. Functionally, transcriptional activator that specifically binds 5'-GATA-3' or 5'-GAT-3' motifs within gene promoters. May be involved in the regulation of some light-responsive genes. This chain is GATA transcription factor 14 (GATA14), found in Arabidopsis thaliana (Mouse-ear cress).